Consider the following 386-residue polypeptide: Leupaxin (386 aa).

The residue at position 1 (Met1) is an N-acetylmethionine. Positions Glu3–Thr15 match the LD motif 1 motif. Positions Arg13–Asp41 are disordered. Ser19 is subject to Phosphoserine. Tyr22 carries the phosphotyrosine modification. Position 54 is a phosphoserine (Ser54). Tyr62 bears the Phosphotyrosine mark. Short sequence motifs (LD motif) lie at residues Asn70 to Pro82 and Gln92 to Met103. At Tyr72 the chain carries Phosphotyrosine; by LYN. Ser81 is subject to Phosphoserine. 4 consecutive LIM zinc-binding domains span residues Gly150–Ser208, Pro209–Ser267, Pro268–Gly326, and Thr327–Leu386.

It belongs to the paxillin family. In terms of assembly, interacts with PTPN22. Interacts with unphosphorylated ITGA4. Interacts with PTK2B/PYK2, PTPN12, AR and SRF. Interacts (via LD motif 3) with LYN and the interaction is induced upon B-cell antigen receptor (BCR) activation. Interacts (via LD motif 3) with PTK2/FAK. Phosphorylated on tyrosine residues. Phosphorylation on Tyr-72 is important for its inhibitory function. Bombesin stimulates phosphorylation on Tyr-22, Tyr-62 and Tyr-72. As to expression, macrophages, monocytes and osteoclasts (at protein level). Strongly expressed in cells and tissues of hematopoietic origin. Highest expression in lymphoid tissues such as spleen, lymph node, thymus and appendix and in the vascular smooth muscle. Lower levels in bone marrow and fetal liver. Also expressed in peripheral blood lymphocytes and a number of hematopoietic cell lines. Very low levels found in epithelial cell lines. Expressed in prostate cancer (PCa) cells and its expression intensity is directly linked to PCa progression.

The protein resides in the cytoplasm. It is found in the cell junction. Its subcellular location is the focal adhesion. It localises to the nucleus. The protein localises to the perinuclear region. The protein resides in the cell projection. It is found in the podosome. Its subcellular location is the cell membrane. Transcriptional coactivator for androgen receptor (AR) and serum response factor (SRF). Contributes to the regulation of cell adhesion, spreading and cell migration and acts as a negative regulator in integrin-mediated cell adhesion events. Suppresses the integrin-induced tyrosine phosphorylation of paxillin (PXN). May play a critical role as an adapter protein in the formation of the adhesion zone in osteoclasts. Negatively regulates B-cell antigen receptor (BCR) signaling. The polypeptide is Leupaxin (LPXN) (Homo sapiens (Human)).